The sequence spans 240 residues: UDP-2,3-diacylglucosamine hydrolase (240 aa).

Mn(2+)-binding residues include Asp-8, His-10, Asp-41, Asn-79, and His-114. 79 to 80 contacts substrate; it reads NR. Positions 122, 160, 164, 167, and 195 each coordinate substrate. 2 residues coordinate Mn(2+): His-195 and His-197.

It belongs to the LpxH family. It depends on Mn(2+) as a cofactor.

Its subcellular location is the cell inner membrane. The catalysed reaction is UDP-2-N,3-O-bis[(3R)-3-hydroxytetradecanoyl]-alpha-D-glucosamine + H2O = 2-N,3-O-bis[(3R)-3-hydroxytetradecanoyl]-alpha-D-glucosaminyl 1-phosphate + UMP + 2 H(+). Its pathway is glycolipid biosynthesis; lipid IV(A) biosynthesis; lipid IV(A) from (3R)-3-hydroxytetradecanoyl-[acyl-carrier-protein] and UDP-N-acetyl-alpha-D-glucosamine: step 4/6. In terms of biological role, hydrolyzes the pyrophosphate bond of UDP-2,3-diacylglucosamine to yield 2,3-diacylglucosamine 1-phosphate (lipid X) and UMP by catalyzing the attack of water at the alpha-P atom. Involved in the biosynthesis of lipid A, a phosphorylated glycolipid that anchors the lipopolysaccharide to the outer membrane of the cell. This chain is UDP-2,3-diacylglucosamine hydrolase, found in Shigella dysenteriae serotype 1 (strain Sd197).